The primary structure comprises 623 residues: UvrABC system protein C (623 aa).

The GIY-YIG domain maps to 28-105; that stretch reads GAPGVYRMLD…IKQLKPKYNV (78 aa). The UVR domain maps to 215-250; the sequence is TRVQEELAEQMMAASEAMEFERAAALRDRIRALTTV.

The protein belongs to the UvrC family. As to quaternary structure, interacts with UvrB in an incision complex.

It localises to the cytoplasm. Functionally, the UvrABC repair system catalyzes the recognition and processing of DNA lesions. UvrC both incises the 5' and 3' sides of the lesion. The N-terminal half is responsible for the 3' incision and the C-terminal half is responsible for the 5' incision. The sequence is that of UvrABC system protein C from Ruegeria pomeroyi (strain ATCC 700808 / DSM 15171 / DSS-3) (Silicibacter pomeroyi).